Consider the following 1004-residue polypeptide: 26S proteasome non-ATPase regulatory subunit 1 homolog A (1004 aa).

At Ala2 the chain carries N-acetylalanine. Lys166 is covalently cross-linked (Glycyl lysine isopeptide (Lys-Gly) (interchain with G-Cter in ubiquitin)). PC repeat units follow at residues 412-447 (SATA…GGSP), 452-485 (GALY…EVIQ), 487-521 (GACL…VAGE), 522-555 (AAGI…EKII), 557-590 (GLAL…IIRY), 591-626 (GGMY…DVRR), 627-659 (TAVL…PHVR), 661-695 (GAAL…FVRQ), 696-736 (GALI…DTMS), and 739-771 (GAIL…TAVI). Disordered stretches follow at residues 858–905 (EQKA…KKAP) and 959–1004 (VLSL…EYAS). A Phosphoserine modification is found at Ser896. The segment covering 965-987 (APTSTASPATGTAAAAQGTPASA) has biased composition (low complexity).

It belongs to the proteasome subunit S1 family. Component of the 19S regulatory particle (RP/PA700) base subcomplex of the 26S proteasome. The 26S proteasome is composed of a core protease (CP), known as the 20S proteasome, capped at one or both ends by the 19S regulatory particle (RP/PA700). The RP/PA700 complex is composed of at least 17 different subunits in two subcomplexes, the base and the lid, which form the portions proximal and distal to the 20S proteolytic core, respectively. In terms of tissue distribution, ubiquitous with highest expression in flowers.

In terms of biological role, acts as a regulatory subunit of the 26 proteasome which is involved in the ATP-dependent degradation of ubiquitinated proteins. The sequence is that of 26S proteasome non-ATPase regulatory subunit 1 homolog A (RPN2A) from Arabidopsis thaliana (Mouse-ear cress).